A 454-amino-acid polypeptide reads, in one-letter code: Transmembrane GTPase fzo (454 aa).

Residues 1–111 (SSMEPEMEQK…NQLKSTLISP (111 aa)) form the Dynamin-type G domain. Topologically, residues 1–322 (SSMEPEMEQK…QMLESLVKSK (322 aa)) are cytoplasmic. The segment at 30-33 (YSTA) is G5 motif. Serine 44 lines the GTP pocket. Residues 112 to 162 (FIEKVSRLIDENKERRANLNAEIEEWELEMQDEREDLQYCFEELTEMTQRL) adopt a coiled-coil conformation. Residues 323–335 (GSLGTVLLGAMAI) traverse the membrane as a helical segment. Residues 336 to 338 (RSF) lie on the Mitochondrial intermembrane side of the membrane. A helical membrane pass occupies residues 339–361 (NWPIVMILGGLVGSFYMYEYAAW). Topologically, residues 362–454 (TTAAQERSFK…DKGQLLASRL (93 aa)) are cytoplasmic. Positions 411–434 (QSNETLNDLNVRTAELTKQIQSME) form a coiled coil.

The protein belongs to the TRAFAC class dynamin-like GTPase superfamily. Dynamin/Fzo/YdjA family. Mitofusin subfamily.

The protein localises to the mitochondrion outer membrane. It catalyses the reaction GTP + H2O = GDP + phosphate + H(+). Its function is as follows. Essential transmembrane GTPase, which mediates mitochondrial fusion during spermatogenesis. In early spermatocytes, fusion of mitochondria give rise to two organelles named Nebenkern and constitutes an important step in mitochondria morphology, which is balanced between fusion and fission. Essential for fertility. The polypeptide is Transmembrane GTPase fzo (fzo) (Drosophila simulans (Fruit fly)).